The primary structure comprises 208 residues: MRTPKHDLPEAVAKRIPIYYRYFKLLETDGIERIKSEQLAKLVAIPSATIRRDFSYIGDLGRSGYGYEVSHLIQIFSAVLKADILTKMAVIGVGNLGRALIENNFRRNDNLQITCAFDTNPALVGQTLNGVPIYAIDQLATVIPAAGITTAISTVPSEASQRSAEQLIDAGITSILNFAPTRLQVPRHINVRYLDLTAELQTLLLFEE.

Residues isoleucine 18 to isoleucine 57 constitute a DNA-binding region (H-T-H motif). Glycine 92 to glycine 97 serves as a coordination point for NAD(+).

It belongs to the transcriptional regulatory Rex family. Homodimer.

It localises to the cytoplasm. In terms of biological role, modulates transcription in response to changes in cellular NADH/NAD(+) redox state. This chain is Redox-sensing transcriptional repressor Rex, found in Latilactobacillus sakei subsp. sakei (strain 23K) (Lactobacillus sakei subsp. sakei).